Consider the following 250-residue polypeptide: Pyridoxine 5'-phosphate synthase (250 aa).

Positions 8 and 19 each coordinate 3-amino-2-oxopropyl phosphate. His-44 functions as the Proton acceptor in the catalytic mechanism. 1-deoxy-D-xylulose 5-phosphate contacts are provided by Arg-46 and His-51. Residue Glu-76 is the Proton acceptor of the active site. A 1-deoxy-D-xylulose 5-phosphate-binding site is contributed by Thr-106. His-200 (proton donor) is an active-site residue. Residues Asp-201 and 223–224 (GH) each bind 3-amino-2-oxopropyl phosphate.

The protein belongs to the PNP synthase family. Homooctamer; tetramer of dimers.

The protein resides in the cytoplasm. The catalysed reaction is 3-amino-2-oxopropyl phosphate + 1-deoxy-D-xylulose 5-phosphate = pyridoxine 5'-phosphate + phosphate + 2 H2O + H(+). It functions in the pathway cofactor biosynthesis; pyridoxine 5'-phosphate biosynthesis; pyridoxine 5'-phosphate from D-erythrose 4-phosphate: step 5/5. Its function is as follows. Catalyzes the complicated ring closure reaction between the two acyclic compounds 1-deoxy-D-xylulose-5-phosphate (DXP) and 3-amino-2-oxopropyl phosphate (1-amino-acetone-3-phosphate or AAP) to form pyridoxine 5'-phosphate (PNP) and inorganic phosphate. The protein is Pyridoxine 5'-phosphate synthase of Allorhizobium ampelinum (strain ATCC BAA-846 / DSM 112012 / S4) (Agrobacterium vitis (strain S4)).